The chain runs to 712 residues: Elongation factor G (712 aa).

A tr-type G domain is found at 8–290; that stretch reads TRYRNIGISA…AVIEFLPSPT (283 aa). Residues 17 to 24, 88 to 92, and 142 to 145 each bind GTP; these read AHIDAGKT, DTPGH, and NKMD.

This sequence belongs to the TRAFAC class translation factor GTPase superfamily. Classic translation factor GTPase family. EF-G/EF-2 subfamily.

Its subcellular location is the cytoplasm. In terms of biological role, catalyzes the GTP-dependent ribosomal translocation step during translation elongation. During this step, the ribosome changes from the pre-translocational (PRE) to the post-translocational (POST) state as the newly formed A-site-bound peptidyl-tRNA and P-site-bound deacylated tRNA move to the P and E sites, respectively. Catalyzes the coordinated movement of the two tRNA molecules, the mRNA and conformational changes in the ribosome. This Acinetobacter baumannii (strain AB0057) protein is Elongation factor G.